The primary structure comprises 74 residues: Cecropin-P3 (74 aa).

Positions 1–13 are cleaved as a signal peptide; sequence MFLIYLLVQTAES. The propeptide at 45-74 is removed in mature form; sequence RRRSVGEEDAIPSHIEVNKFFLRKPAKEHI.

This sequence belongs to the cecropin family. As to expression, expressed in the body wall, intestine, uterus and ovary.

The protein localises to the secreted. Functionally, has antibacterial activity against several Gram-positive and Gram-negative bacteria. Is weakly active against yeasts. Acts by a nonpore mechanism. The sequence is that of Cecropin-P3 (ASCEC-3) from Ascaris suum (Pig roundworm).